Consider the following 407-residue polypeptide: S-adenosylmethionine synthase (407 aa).

His-19 provides a ligand contact to ATP. Asp-21 contacts Mg(2+). Glu-47 is a K(+) binding site. L-methionine-binding residues include Glu-60 and Gln-103. A flexible loop region spans residues Gln-103–Thr-113. A disordered region spans residues Ala-108–Ala-131. ATP is bound by residues Asp-178–Lys-180, Asp-258, Arg-264–Lys-265, Ala-281, and Lys-285. Position 258 (Asp-258) interacts with L-methionine. Lys-289 is a binding site for L-methionine.

The protein belongs to the AdoMet synthase family. Homotetramer; dimer of dimers. It depends on Mg(2+) as a cofactor. Requires K(+) as cofactor.

The protein localises to the cytoplasm. The catalysed reaction is L-methionine + ATP + H2O = S-adenosyl-L-methionine + phosphate + diphosphate. The protein operates within amino-acid biosynthesis; S-adenosyl-L-methionine biosynthesis; S-adenosyl-L-methionine from L-methionine: step 1/1. In terms of biological role, catalyzes the formation of S-adenosylmethionine (AdoMet) from methionine and ATP. The overall synthetic reaction is composed of two sequential steps, AdoMet formation and the subsequent tripolyphosphate hydrolysis which occurs prior to release of AdoMet from the enzyme. This chain is S-adenosylmethionine synthase, found in Corynebacterium efficiens (strain DSM 44549 / YS-314 / AJ 12310 / JCM 11189 / NBRC 100395).